Consider the following 311-residue polypeptide: Putative F-box protein At3g28280 (311 aa).

An F-box domain is found at 1-43; that stretch reads MNSLPEDLLAMILVKLPIKIFTTFKIVCTQWESMVDSPYFRDL.

The sequence is that of Putative F-box protein At3g28280 from Arabidopsis thaliana (Mouse-ear cress).